Here is an 805-residue protein sequence, read N- to C-terminus: Centrosomal protein of 85 kDa-like (805 aa).

Disordered stretches follow at residues 1–27 and 50–89; these read MWGR…AGPD and RNNH…LSFK. S15 is subject to Phosphoserine. Over residues 60 to 74 the composition is skewed to polar residues; sequence ASDSGDTGIGTSCSD. Residue S207 is modified to Phosphoserine. Residues 439-682 adopt a coiled-coil conformation; the sequence is SQQGEFEQKL…LENQRQTDET (244 aa).

The protein belongs to the CEP85 family. As to expression, isoform 1 and isoform 4 are expressed in spleen, lymph, thymus, tonsil and peripheral blood leukocytes, with isoform 1 expressed at higher levels. Isoform 4 is detected in K-562 leukemia cells and in the blood of precursor T lymphoblastic lymphoma (T-ALL) patients.

The protein localises to the cytoplasm. It is found in the cytoskeleton. Its subcellular location is the microtubule organizing center. It localises to the centrosome. Its function is as follows. Plays an essential role in neuronal cell migration. In Homo sapiens (Human), this protein is Centrosomal protein of 85 kDa-like.